The sequence spans 686 residues: Protein-glutamine gamma-glutamyltransferase 2 (686 aa).

Alanine 2 bears the N-acetylalanine mark. 2 cysteine pairs are disulfide-bonded: cysteine 230-cysteine 370 and cysteine 370-cysteine 371. Catalysis depends on residues cysteine 277, histidine 335, and aspartate 358. Ca(2+) is bound by residues asparagine 398, aspartate 400, glutamate 437, glutamate 447, and glutamate 452. Position 468 is an N6-acetyllysine (lysine 468). 476–483 (RIRVGDSM) contributes to the GTP binding site. Glutamate 538 contacts Ca(2+). Residue 579–582 (RDLY) participates in GTP binding. An Isoglutamyl lysine isopeptide (Gln-Lys) (interchain with K-?) cross-link involves residue glutamine 632.

The protein belongs to the transglutaminase superfamily. Transglutaminase family. In terms of assembly, monomer. Interacts with phospholipase C; promoting alpha-1 adrenergic receptor signaling. Interacts with PLCD1. It depends on Ca(2+) as a cofactor. Post-translationally, disulfide bond formation inactivates the calcium-dependent acyltransferase activity. Cys-370 can form disulfide bonds with both Cys-230 and Cys-371: formation of a disulfide bond between Cys-230 and Cys-370 facilitates formation of the disulfide between Cys-370 and Cys-371, which promotes inactivation of the acyltransferase activity. May also form interchain disulfids between Cys-230 and Cys-370. Ca(2+) protects against disulfide bond formation and inactivation. In terms of processing, auto-transglutaminated: Forms covalent cross-links mediated by transglutaminase between Gln-632 and the epsilon-amino group of a lysine residue of itself or HMGB1, forming homopolymers and heteropolymers, respectively. S-nitrosylated, leading to inactivation of the acyltransferase activity.

It is found in the cytoplasm. Its subcellular location is the cytosol. The protein localises to the nucleus. It localises to the chromosome. The protein resides in the secreted. It is found in the extracellular space. Its subcellular location is the extracellular matrix. The protein localises to the cell membrane. It localises to the mitochondrion. The catalysed reaction is L-glutaminyl-[protein] + L-lysyl-[protein] = [protein]-L-lysyl-N(6)-5-L-glutamyl-[protein] + NH4(+). It carries out the reaction L-glutaminyl-[protein] + serotonin = 5-serotonyl-L-glutamyl-[protein] + NH4(+). The enzyme catalyses L-glutaminyl-[protein] + dopamine = 5-dopaminyl-L-glutamyl-[protein] + NH4(+). It catalyses the reaction L-glutaminyl-[protein] + histamine = 5-histaminyl-L-glutamyl-[protein] + NH4(+). The catalysed reaction is L-glutaminyl-[protein] + (R)-noradrenaline = 5-(R)-noradrenalinyl-L-glutamyl-[protein] + NH4(+). It carries out the reaction L-glutaminyl-[protein] + H2O = L-glutamyl-[protein] + NH4(+). Its activity is regulated as follows. Acyltransferase activity is regulated by the binding of GTP and Ca(2+): inactivated by GTP, which stabilizes its closed structure, thereby obstructing the accessibility of substrates to the active sites. In contrast, Ca(2+) acts as a cofactor by inducing conformational change to the active open form. In absence of Ca(2+), Mg(2+) may bind Ca(2+)-binding sites, promoting GTP-binding and subsequent inhibition of the acyltransferase activity. Extracellularly reduced and activated by CLIC3. Calcium-dependent acyltransferase that catalyzes the formation of covalent bonds between peptide-bound glutamine and various primary amines, such as gamma-amino group of peptide-bound lysine, or mono- and polyamines, thereby producing cross-linked or aminated proteins, respectively. Involved in many biological processes, such as bone development, angiogenesis, wound healing, cellular differentiation, chromatin modification and apoptosis. Acts as a protein-glutamine gamma-glutamyltransferase by mediating the cross-linking of proteins, such as ACO2, HSPB6, FN1, HMGB1, RAP1GDS1, SLC25A4/ANT1, SPP1 and WDR54. Under physiological conditions, the protein cross-linking activity is inhibited by GTP; inhibition is relieved by Ca(2+) in response to various stresses. When secreted, catalyzes cross-linking of proteins of the extracellular matrix, such as FN1 and SPP1 resulting in the formation of scaffolds. Plays a key role during apoptosis, both by (1) promoting the cross-linking of cytoskeletal proteins resulting in condensation of the cytoplasm, and by (2) mediating cross-linking proteins of the extracellular matrix, resulting in the irreversible formation of scaffolds that stabilize the integrity of the dying cells before their clearance by phagocytosis, thereby preventing the leakage of harmful intracellular components. In addition to protein cross-linking, can use different monoamine substrates to catalyze a vast array of protein post-translational modifications: mediates aminylation of serotonin, dopamine, noradrenaline or histamine into glutamine residues of target proteins to generate protein serotonylation, dopaminylation, noradrenalinylation or histaminylation, respectively. Mediates protein serotonylation of small GTPases during activation and aggregation of platelets, leading to constitutive activation of these GTPases. Plays a key role in chromatin organization by mediating serotonylation and dopaminylation of histone H3. Catalyzes serotonylation of 'Gln-5' of histone H3 (H3Q5ser) during serotonergic neuron differentiation, thereby facilitating transcription. Acts as a mediator of neurotransmission-independent role of nuclear dopamine in ventral tegmental area (VTA) neurons: catalyzes dopaminylation of 'Gln-5' of histone H3 (H3Q5dop), thereby regulating relapse-related transcriptional plasticity in the reward system. Regulates vein remodeling by mediating serotonylation and subsequent inactivation of ATP2A2/SERCA2. Also acts as a protein deamidase by mediating the side chain deamidation of specific glutamine residues of proteins to glutamate. Catalyzes specific deamidation of protein gliadin, a component of wheat gluten in the diet. May also act as an isopeptidase cleaving the previously formed cross-links. Also able to participate in signaling pathways independently of its acyltransferase activity: acts as a signal transducer in alpha-1 adrenergic receptor-mediated stimulation of phospholipase C-delta (PLCD) activity and is required for coupling alpha-1 adrenergic agonists to the stimulation of phosphoinositide lipid metabolism. The protein is Protein-glutamine gamma-glutamyltransferase 2 of Mus musculus (Mouse).